We begin with the raw amino-acid sequence, 286 residues long: Pyridoxal kinase PdxY (286 aa).

Residues Ser9 and 44–45 each bind substrate; that span reads MQ. Positions 111, 147, and 180 each coordinate ATP. Position 221 (Asp221) interacts with substrate.

Belongs to the pyridoxine kinase family. PdxY subfamily. As to quaternary structure, homodimer. The cofactor is Mg(2+).

The catalysed reaction is pyridoxal + ATP = pyridoxal 5'-phosphate + ADP + H(+). Its pathway is cofactor metabolism; pyridoxal 5'-phosphate salvage; pyridoxal 5'-phosphate from pyridoxal: step 1/1. Pyridoxal kinase involved in the salvage pathway of pyridoxal 5'-phosphate (PLP). Catalyzes the phosphorylation of pyridoxal to PLP. This chain is Pyridoxal kinase PdxY, found in Burkholderia orbicola (strain AU 1054).